A 238-amino-acid polypeptide reads, in one-letter code: Uridylate kinase (238 aa).

12–15 provides a ligand contact to ATP; it reads KLSG. The segment at 20 to 25 is involved in allosteric activation by GTP; sequence GEKGFG. Gly-54 is a UMP binding site. 2 residues coordinate ATP: Gly-55 and Arg-59. UMP is bound by residues Asp-72 and 133 to 140; that span reads TGNPYFST. Positions 166 and 169 each coordinate ATP.

Belongs to the UMP kinase family. In terms of assembly, homohexamer.

It localises to the cytoplasm. The enzyme catalyses UMP + ATP = UDP + ADP. It participates in pyrimidine metabolism; CTP biosynthesis via de novo pathway; UDP from UMP (UMPK route): step 1/1. With respect to regulation, allosterically activated by GTP. Inhibited by UTP. Its function is as follows. Catalyzes the reversible phosphorylation of UMP to UDP. The protein is Uridylate kinase of Clostridium botulinum (strain Langeland / NCTC 10281 / Type F).